Reading from the N-terminus, the 155-residue chain is Small ribosomal subunit protein uS7cz/uS7cy (155 aa).

Belongs to the universal ribosomal protein uS7 family. In terms of assembly, part of the 30S ribosomal subunit.

The protein localises to the plastid. It localises to the chloroplast. In terms of biological role, one of the primary rRNA binding proteins, it binds directly to 16S rRNA where it nucleates assembly of the head domain of the 30S subunit. In Nymphaea alba (White water-lily), this protein is Small ribosomal subunit protein uS7cz/uS7cy (rps7-A).